The primary structure comprises 207 residues: Transcription antitermination protein NusB (207 aa).

It belongs to the NusB family.

In terms of biological role, involved in transcription antitermination. Required for transcription of ribosomal RNA (rRNA) genes. Binds specifically to the boxA antiterminator sequence of the ribosomal RNA (rrn) operons. The sequence is that of Transcription antitermination protein NusB from Trichodesmium erythraeum (strain IMS101).